We begin with the raw amino-acid sequence, 272 residues long: MEAMPSRCLFLLFLSTCKLSPEVVAEVQESSDGPGAQEPMRLTDVQAAMEFIAAAEVAVIGFFQDSEVPAVSLIHSVVQNFQDVSFGISTASEVLAYYNITGNTISLFRLVDNKQLDLKGEDFESMDATKLSRFIESNNLRLVTEYNAITAIGLFNSMIPIHLLLIMNKASSEFEENLHRFQEAAKLFQGRILFILVDSGVKQNEKAISFFKLKMAELPALAIYQTLDDKWDTLPITEVLVEQVQNFCDGFLKGKGLRQNHEAKEKTSKVEL.

A signal peptide spans 1–25 (MEAMPSRCLFLLFLSTCKLSPEVVA). The region spanning 38–151 (EPMRLTDVQA…LVTEYNAITA (114 aa)) is the Thioredoxin domain. Residue Asn-99 is glycosylated (N-linked (GlcNAc...) asparagine). The segment at 229-232 (DKWD) is PDIA3-binding site. Residues 269–272 (KVEL) carry the Prevents secretion from ER motif.

The protein belongs to the protein disulfide isomerase family. In terms of assembly, interacts with PDIA3.

The protein localises to the endoplasmic reticulum lumen. Specifically binds unfolded proteins and may recruit protein disulfide isomerase PDIA3 to unfolded substrates. Binds protein substrates via a hydrophobic pocket in the C-terminal domain. May play a role in the unfolded stress response. The polypeptide is Endoplasmic reticulum resident protein 27 (ERP27) (Bos taurus (Bovine)).